A 226-amino-acid polypeptide reads, in one-letter code: 2-C-methyl-D-erythritol 4-phosphate cytidylyltransferase (226 aa).

The protein belongs to the IspD/TarI cytidylyltransferase family. IspD subfamily.

It carries out the reaction 2-C-methyl-D-erythritol 4-phosphate + CTP + H(+) = 4-CDP-2-C-methyl-D-erythritol + diphosphate. It functions in the pathway isoprenoid biosynthesis; isopentenyl diphosphate biosynthesis via DXP pathway; isopentenyl diphosphate from 1-deoxy-D-xylulose 5-phosphate: step 2/6. Functionally, catalyzes the formation of 4-diphosphocytidyl-2-C-methyl-D-erythritol from CTP and 2-C-methyl-D-erythritol 4-phosphate (MEP). The sequence is that of 2-C-methyl-D-erythritol 4-phosphate cytidylyltransferase from Trichodesmium erythraeum (strain IMS101).